Consider the following 502-residue polypeptide: C2H2-type transcription factor MSN2 (502 aa).

2 consecutive C2H2-type zinc fingers follow at residues 385-408 and 414-436; these read FVCH…RSLH and FACG…SRIH.

The protein localises to the nucleus. In terms of biological role, key downstream transcription factor in the HOG1-MAPK pathway. Plays crucial roles in the regulation of growth, conidiation, trap development and fatty acid metabolism. Negatively regulates secondary metabolism such as arthrobotrisins biosynthesis.Also regulates autophagy and endocytosis. The chain is C2H2-type transcription factor MSN2 from Arthrobotrys oligospora (strain ATCC 24927 / CBS 115.81 / DSM 1491) (Nematode-trapping fungus).